The chain runs to 466 residues: Adenosylhomocysteinase (466 aa).

Residues T57, D132, and E192 each contribute to the substrate site. Residue 193 to 195 (TTT) coordinates NAD(+). The substrate site is built by K222 and D226. NAD(+)-binding positions include N227, 256–261 (GYGDVG), E279, N314, 335–337 (IGH), and N380.

The protein belongs to the adenosylhomocysteinase family. NAD(+) serves as cofactor.

It localises to the cytoplasm. The catalysed reaction is S-adenosyl-L-homocysteine + H2O = L-homocysteine + adenosine. It participates in amino-acid biosynthesis; L-homocysteine biosynthesis; L-homocysteine from S-adenosyl-L-homocysteine: step 1/1. Functionally, may play a key role in the regulation of the intracellular concentration of adenosylhomocysteine. This is Adenosylhomocysteinase from Rhizobium etli (strain CIAT 652).